We begin with the raw amino-acid sequence, 269 residues long: Putative esterase/lipase 1 (269 aa).

Residue H27 is part of the active site. The Charge relay system role is filled by S94.

It belongs to the lipase/esterase LIP3/BchO family.

This chain is Putative esterase/lipase 1, found in Mycoplasma pneumoniae (strain ATCC 29342 / M129 / Subtype 1) (Mycoplasmoides pneumoniae).